The primary structure comprises 139 residues: Small ribosomal subunit protein bS6 (139 aa).

The segment at Leu119–Lys139 is disordered. The segment covering Gly130–Lys139 has biased composition (polar residues).

Belongs to the bacterial ribosomal protein bS6 family.

In terms of biological role, binds together with bS18 to 16S ribosomal RNA. The protein is Small ribosomal subunit protein bS6 of Borreliella burgdorferi (strain ZS7) (Borrelia burgdorferi).